The primary structure comprises 558 residues: Potassium-transporting ATPase potassium-binding subunit 1 (558 aa).

Helical transmembrane passes span 1-21 (MEIILFLTMMVMIAYVFSGYL), 66-86 (FNGFMGVITFVLLIVQQWLFL), 127-147 (MIVMTYLMFTSSASGYAVCIA), 166-186 (IVRFIVRVLLPLSCLISILLM), 245-265 (IWSNFIEMGSMMLLPMSMLFL), 281-301 (ALILFVAMFFIFIAILTLTMW), 327-347 (FGAGLSALFTVITTAFTTGSV), 354-374 (LTPLGGLGPMVLMMLNVVFGG), 377-397 (VGLMNLLIYVLLTLFICSLMV), 416-436 (IVLVFLIHPILILVFSALAFM), 482-502 (ISTGIIMLLSRYIPIILQLMI), and 531-551 (IVFIVLLSGLTFIPVLLLGPI).

Belongs to the KdpA family. The system is composed of three essential subunits: KdpA, KdpB and KdpC.

The protein localises to the cell membrane. In terms of biological role, part of the high-affinity ATP-driven potassium transport (or Kdp) system, which catalyzes the hydrolysis of ATP coupled with the electrogenic transport of potassium into the cytoplasm. This subunit binds the extracellular potassium ions and delivers the ions to the membrane domain of KdpB through an intramembrane tunnel. This Staphylococcus aureus (strain MRSA252) protein is Potassium-transporting ATPase potassium-binding subunit 1.